A 604-amino-acid polypeptide reads, in one-letter code: NADPH oxidase activator (604 aa).

TPR repeat units follow at residues 36–69 and 71–103; these read SKIN…DKYL and SSYY…LRGH. Disordered regions lie at residues 180–298 and 383–581; these read FKPP…KLPS and DIIP…PYQV. 2 stretches are compositionally biased toward low complexity: residues 194-215 and 225-243; these read SATT…SPPS and PSSS…SSSP. The segment covering 244–260 has biased composition (pro residues); it reads KLPPTPKPSFGSSPPPS. Residues 261–284 show a composition bias toward low complexity; it reads SSSSSSSSSSSSSSSISPLTNKTL. The PB1 domain occupies 309-384; the sequence is KITLKVFYKD…EINEINVKDI (76 aa). 3 stretches are compositionally biased toward low complexity: residues 396 to 424, 435 to 453, and 467 to 483; these read PDKT…SSSS, PKTT…TTST, and FGST…SSSS. Residues 502 to 528 are compositionally biased toward polar residues; sequence LLKQQNQTQSINIPPKVPTSSRPKMTQ. Residues 529-570 are compositionally biased toward low complexity; it reads SHSPPSSSPLSSYSTSFQSVSSPSLSSSYNGSTSSYGGFSSS. A WW domain is found at 573 to 604; sequence PPTPYPYQVLYTDSNEKYYLNTETNETFWELP.

In terms of biological role, may function as an activator of NOX1, a superoxide-producing NADPH oxidase. The chain is NADPH oxidase activator (ncfA) from Dictyostelium discoideum (Social amoeba).